Consider the following 692-residue polypeptide: Protein hook (692 aa).

Residues 6–123 (SEMYYSLLEW…RLLQLVLGCA (118 aa)) form the Calponin-homology (CH) domain. A coiled-coil region spans residues 135–576 (EIMGLEEELQ…YQSKVIQLET (442 aa)). Residues 161-180 (AGERSPSSSASGGAGSGGAV) form a disordered region.

This sequence belongs to the hook family. In terms of assembly, homodimer. Interacts with microtubules via its N-terminus.

The protein localises to the cytoplasm. Its subcellular location is the cytoskeleton. The protein resides in the endosome. It is found in the synapse. Its function is as follows. Involved in endocytic trafficking by stabilizing organelles of the endocytic pathway. Probably acts as a cytoskeletal linker protein required to tether endosome vesicles to the cytoskeleton. Involved in modulation of endocytosis at stages required for down-regulation of membrane proteins that control synapse size. Not involved in synaptic vesicle recycling. Required in R7 cells for boss endocytosis into multivesicular bodies (MVBs). Has a role in regulating adult longevity. The protein is Protein hook of Drosophila willistoni (Fruit fly).